The primary structure comprises 342 residues: tRNA(Ile)-lysidine synthase (342 aa).

ATP is bound at residue 31–36 (SGGQDS).

Belongs to the tRNA(Ile)-lysidine synthase family.

The protein localises to the cytoplasm. It catalyses the reaction cytidine(34) in tRNA(Ile2) + L-lysine + ATP = lysidine(34) in tRNA(Ile2) + AMP + diphosphate + H(+). Functionally, ligates lysine onto the cytidine present at position 34 of the AUA codon-specific tRNA(Ile) that contains the anticodon CAU, in an ATP-dependent manner. Cytidine is converted to lysidine, thus changing the amino acid specificity of the tRNA from methionine to isoleucine. The polypeptide is tRNA(Ile)-lysidine synthase (Nostoc sp. (strain PCC 7120 / SAG 25.82 / UTEX 2576)).